Consider the following 124-residue polypeptide: Prefoldin subunit beta (124 aa).

This sequence belongs to the prefoldin subunit beta family. As to quaternary structure, heterohexamer of two alpha and four beta subunits.

The protein localises to the cytoplasm. Molecular chaperone capable of stabilizing a range of proteins. Seems to fulfill an ATP-independent, HSP70-like function in archaeal de novo protein folding. This chain is Prefoldin subunit beta (pfdB), found in Thermoplasma volcanium (strain ATCC 51530 / DSM 4299 / JCM 9571 / NBRC 15438 / GSS1).